Reading from the N-terminus, the 209-residue chain is MSNKKRSASSSRWLQEHFSDKYVIQAQKKGLRSRAWFKLDEIQQSDKLFKQGMTVVDLGAAPGGWSQYAVTQIGSKGRVIACDLLPMDPIVGVDFLQGDFRDELVLKALLERVGDKKVQVVMCDMAPNMSGTPAVDIPKSMYLVELALDMCRDVLAPGGSFLVKVFQGDGFDEYLREIRSLFTKVKIRKPDASRARSREVYIVATGRKL.

S-adenosyl-L-methionine-binding residues include Gly63, Trp65, Asp83, Asp99, and Asp124. Catalysis depends on Lys164, which acts as the Proton acceptor.

This sequence belongs to the class I-like SAM-binding methyltransferase superfamily. RNA methyltransferase RlmE family.

The protein localises to the cytoplasm. It catalyses the reaction uridine(2552) in 23S rRNA + S-adenosyl-L-methionine = 2'-O-methyluridine(2552) in 23S rRNA + S-adenosyl-L-homocysteine + H(+). Specifically methylates the uridine in position 2552 of 23S rRNA at the 2'-O position of the ribose in the fully assembled 50S ribosomal subunit. The protein is Ribosomal RNA large subunit methyltransferase E of Yersinia pseudotuberculosis serotype O:1b (strain IP 31758).